A 432-amino-acid polypeptide reads, in one-letter code: Enolase (432 aa).

Glutamine 163 is a (2R)-2-phosphoglycerate binding site. Catalysis depends on glutamate 205, which acts as the Proton donor. Positions 242, 288, and 315 each coordinate Mg(2+). 4 residues coordinate (2R)-2-phosphoglycerate: lysine 340, arginine 369, serine 370, and lysine 391. Residue lysine 340 is the Proton acceptor of the active site.

The protein belongs to the enolase family. It depends on Mg(2+) as a cofactor.

It is found in the cytoplasm. The protein localises to the secreted. The protein resides in the cell surface. The enzyme catalyses (2R)-2-phosphoglycerate = phosphoenolpyruvate + H2O. It participates in carbohydrate degradation; glycolysis; pyruvate from D-glyceraldehyde 3-phosphate: step 4/5. Functionally, catalyzes the reversible conversion of 2-phosphoglycerate (2-PG) into phosphoenolpyruvate (PEP). It is essential for the degradation of carbohydrates via glycolysis. In Enterococcus faecalis (strain ATCC 700802 / V583), this protein is Enolase.